The chain runs to 2477 residues: MDPSGVKVLETAEDIQERRQQVLDRYHRFKELSSLRRQKLEDSYRFQFFQRDADELGKWIQEKLQIASDENYKDPSNLQGKLQKHQAFEAEVQANSGAIVKLDETGNQMINEGHFASETIRTRLQELHRLWELLLEKMREKGVKLLQAQKLVQFLRECEDVMDWINDKEAIVTSEELGQDLEHVEVLQKKFEEFQTDLAAHEERVNEVNQFAGKLIQEQHPEEELIKSKQDEVNASWQRLKGLAQQRQGKLFGAAEVQRFNRDVDETISWIKEKGQLMASDDFGRDLASVQALLRKHEGLERDLAAFHHKVKALCAEADRLQQSHPINASQIQVKREELIANWEQIRTLAAERHARLNDSYRLQRFLADFRDLTSWVTEMKALINADELANDVAGAEALLDRHQEHKGEIDAHEDSFRSADESGQALLAAGHYASDEVKEKLTILSDERSALLELWELRRQQYEQCMDLQLFYRDTEQVDNWMSKQEAFLLNEDLGDSLDSVEALLKKHEDFEKSLSAQEEKITALDEFATKLIQNNHYAMDDVATRRDALLSRRNALHERAMKRRAQLADSFHLQQFFRDSDELKSWVNEKMKTATDEAYKDPSNLQGKVQKHQAFEAELSANQSRIDALEKAGQKLIDVNHYASDEVAARMNEVISLWKKLLEATELKGIKLREANQQQQFNRNVEDIELWLYEVEGHLASDDYGKDLTSVQNLQKKHALLEADVAAHQDPIDGITIQARQFQDAGHFDADNIKKKQEALVARYEALKDPMVARKQKLADSLRLQQLFRDIEDEETWIREKEPIAASTNRGKDLIGVQNLLKKHQALQAEIAGHEPRIKAVTQKGNAMVEEGHFAAEDVKIKLNELNQKWDSLKAKASQRRQDLEDSLQAQQYFADANEAQSWMREKEPIVGSTDYGKDEDSAEALLKKHEALMSDLSAYGSSIQALREQAQSCRQQVAPTDDETGKELVLALYDYQEKSPREVTMKKGDILTLLNSTNKDWWKVEVNDRQGFVPAAYVKKLDPAQSASRENLLEEQGSIALRQEQIDNQTLITKEVGSVSLRMKQVEELYHSLLELGEKRKGMLEKSCKKFMLFREANELQQWINEKEAALTNEEVGADLEQVEVLQKKFDDFQKDLKANESRLKDINKVANDLESEGLMAEEVQAVEHQEVYGMMPRDETDSKTVSPWKSARMMVHTVATFNSIKELNERWRSLQQLAEERSQLLGSADEVQRFHRDADETKEWIEEKNQALNTDNYGHDLASVQALQRNDEGFERDLAALGDKVNSLGETAQRLIQSHPELAEDLQEKCTELNQAWSSLGKRADQRKEKLGDSHDLQRFLSDFRDLMSWINGIRGLVSSDELAKDVTGAEALLERHQEHRTEIDARAGTFQAFEQFGQQLLARGHYASPEIKEKLDILDQERTDLEKAWVQRRMMLDQCLELQLFHRDCEQAENWMAAREAFLNTEDKGDSLDSVEALIKKHEDFDKAINVQEEKIAVLQSFADQLIAADHYAKGVIANRRNEVLDRWRRLKAQMIEKRSKLGESQTLQQFSRDVDEIEAWISEKLQTASDESYKDPTNIQLSKLLSKHQKHQAFEAELHANADRIRGVIEMGNPLIERGACAGSEDAVKARLAALADQWEFLVQKSSEKSQKLKEANKQQNFNTGIKDFDFWLSEVEALLASEDYGKDLASVNNLLKKHQLLEADISAHEDRLKDLNSQADSLMTSSAFDTSQVKDKRETINGRFQRIKSMAAARRAKLNESHRLHQFFRDMDDEESWIKEKKLLVSSEDYGRDLTGVQNLRKKHKRLEAELAAHEPAIQGVLDTGKKLSDDNTIGKEEIQQRLAQFVDHWKELKQLAAARGQRLEESLEYQQFVANVEEEEAWINEKMTLVASEDYGDTLAAIQGLLKKHEAFETDFTVHKDRVNDVCANGEDLIKKNNHHVENITAKMKGLKGKVSDLEKAAAQRKAKLDENSAFLQFNWKADVVESWIGEKENSLKTDDYGRDLSSVQTLLTKQETFDAGLQAFQQEGIANITALKDQLLAAKHIQSKAIEVRHASLMKRWNQLLANSAARKKKLLEAQEHFRKVEDLFLTFAKKASAFNSWFENAEEDLTDPVRCNSLEEIKALREAHDAFRSSLSSAQADFNQLAELDRQIKSFRVASNPYTWFTMEALEETWRNLQKIIKERELELQKEQRRQEENDKLRQEFAQHANAFHQWIQETRTYLLDGSCMVEESGTLESQLEATKRKHQEIRAMRSQLKKIEDLGAAMEEALILDNKYTEHSTVGLAQQWDQLDQLGMRMQHNLEQQIQARNTTGVTEEALKEFSMMFKHFDKDKSGRLNHQEFKSCLRSLGYDLPMVEEGEPDPEFESILDTVDPNRDGHVSLQEYMAFMISRETENVKSSEEIESAFRALSSERKPYVTKEELYQNLTREQADYCISHMKPYMDGKGRELPSAYDYIEFTRSLFVN.

Residues 1 to 14 form an N-terminal domain region; sequence MDPSGVKVLETAED. Spectrin repeat units lie at residues 45–146, 150–251, 256–358, 361–465, 468–570, 574–676, 679–781, 785–888, 891–969, and 1096–1162; these read RFQF…VKLL, KLVQ…QGKL, EVQR…ARLN, YRLQ…QYEQ, DLQL…AQLA, HLQQ…KLRE, QQQQ…QKLA, RLQQ…DLED, QAQQ…ETGK, and LFRE…SEGL. One can recognise an SH3 domain in the interval 967–1026; that stretch reads TGKELVLALYDYQEKSPREVTMKKGDILTLLNSTNKDWWKVEVNDRQGFVPAAYVKKLDP. Position 1176 is a phosphotyrosine (Tyr1176). Spectrin repeat units follow at residues 1234-1336, 1339-1442, 1446-1549, 1552-1661, 1664-1767, 1769-1873, 1876-1979, 1983-2086, 2097-2199, and 2211-2315; these read EVQR…EKLG, HDLQ…MMLD, ELQL…KLGE, TLQQ…KLKE, KQQN…KLNE, HRLH…RLEE, EYQQ…KLDE, FLQF…KLLE, LFLT…LELQ, and LRQE…NLEQ. Positions 2257 to 2477 are C-terminal domain; it reads HQEIRAMRSQ…IEFTRSLFVN (221 aa). EF-hand domains are found at residues 2328–2363, 2371–2406, and 2409–2444; these read EALK…LGYD, EPDP…RETE, and KSSE…EQAD. Residues Asp2341, Asp2343, Ser2345, Arg2347, Glu2352, Asp2384, Asn2386, Asp2388, His2390, and Glu2395 each contribute to the Ca(2+) site.

Belongs to the spectrin family. As to quaternary structure, like erythrocyte spectrin, the spectrin-like proteins are capable of forming dimers which can further associate to tetramers. Interacts with ACP1. In terms of processing, phosphorylation of Tyr-1176 decreases sensitivity to cleavage by calpain in vitro.

Its subcellular location is the cytoplasm. It localises to the cytoskeleton. It is found in the cell cortex. Morphologically, spectrin-like proteins appear to be related to spectrin, showing a flexible rod-like structure. They can bind actin but seem to differ in their calmodulin-binding activity. In nonerythroid tissues, spectrins, in association with some other proteins, may play an important role in membrane organization. The sequence is that of Spectrin alpha chain, non-erythrocytic 1 (SPTAN1) from Gallus gallus (Chicken).